Reading from the N-terminus, the 173-residue chain is Myeloid-derived growth factor (173 aa).

A signal peptide spans 1–31; it reads MAAPSGGWNGVGASLWAALLLGAVALRPAEA.

It belongs to the MYDGF family. As to expression, expressed in eosinophils (at protein level). Expressed in bone marrow cells. Expressed in synovial tissue. Found in synovial fluid of patients with arthropaties.

Its subcellular location is the secreted. The protein resides in the endoplasmic reticulum-Golgi intermediate compartment. The protein localises to the endoplasmic reticulum. It localises to the golgi apparatus. In terms of biological role, bone marrow-derived monocyte and paracrine-acting protein that promotes cardiac myocyte survival and adaptive angiogenesis for cardiac protection and/or repair after myocardial infarction (MI). Stimulates endothelial cell proliferation through a MAPK1/3-, STAT3- and CCND1-mediated signaling pathway. Inhibits cardiac myocyte apoptosis in a PI3K/AKT-dependent signaling pathway. Involved in endothelial cell proliferation and angiogenesis. This chain is Myeloid-derived growth factor, found in Homo sapiens (Human).